Consider the following 210-residue polypeptide: uncharacterized protein (210 aa).

Disordered regions lie at residues 1–21 (MHRL…TDAI) and 168–210 (EALQ…STAQ). A coiled-coil region spans residues 21-175 (IDSLDKRSDS…ELEALQQESS (155 aa)). Residues 174–184 (SSWLGDQSTAE) show a composition bias toward polar residues.

This sequence belongs to the SNF7 family.

This is an uncharacterized protein from Schizosaccharomyces pombe (strain 972 / ATCC 24843) (Fission yeast).